Reading from the N-terminus, the 358-residue chain is Microbial Terpene synthase-like protein 13 (358 aa).

Belongs to the terpene synthase family.

Its function is as follows. No terpene synthase activity detected in vitro. The sequence is that of Microbial Terpene synthase-like protein 13 from Selaginella moellendorffii (Spikemoss).